A 122-amino-acid polypeptide reads, in one-letter code: Large ribosomal subunit protein uL14 (122 aa).

The protein belongs to the universal ribosomal protein uL14 family. In terms of assembly, part of the 50S ribosomal subunit. Forms a cluster with proteins L3 and L19. In the 70S ribosome, L14 and L19 interact and together make contacts with the 16S rRNA in bridges B5 and B8.

Functionally, binds to 23S rRNA. Forms part of two intersubunit bridges in the 70S ribosome. The chain is Large ribosomal subunit protein uL14 from Thioalkalivibrio sulfidiphilus (strain HL-EbGR7).